The chain runs to 340 residues: Methionine import ATP-binding protein MetN (340 aa).

The 239-residue stretch at 5–243 (IEFRGVTKSF…PQTTTARRFV (239 aa)) folds into the ABC transporter domain. 40–47 (GYSGAGKS) serves as a coordination point for ATP.

The protein belongs to the ABC transporter superfamily. Methionine importer (TC 3.A.1.24) family. The complex is composed of two ATP-binding proteins (MetN), two transmembrane proteins (MetI) and a solute-binding protein (MetQ).

The protein localises to the cell membrane. The enzyme catalyses L-methionine(out) + ATP + H2O = L-methionine(in) + ADP + phosphate + H(+). The catalysed reaction is D-methionine(out) + ATP + H2O = D-methionine(in) + ADP + phosphate + H(+). Functionally, part of the ABC transporter complex MetNIQ involved in methionine import. Responsible for energy coupling to the transport system. The protein is Methionine import ATP-binding protein MetN of Leifsonia xyli subsp. xyli (strain CTCB07).